We begin with the raw amino-acid sequence, 586 residues long: Merlin (586 aa).

Residue S9 is modified to Phosphoserine. In terms of domain architecture, FERM spans 18–307 (FTVRIVTMDA…GNHDLFMRRR (290 aa)). A disordered region spans residues 325-354 (KARKQMERQRLAREKQMREEAERSRDEPER). At S514 the chain carries Phosphoserine; by PAK. Residues 557 to 586 (LHSEHSDSGTSSKHNTIKKPQAQGRRPICI) are disordered.

Interacts with NHERF1, HGS and AGAP2. Interacts with SGSM3. Interacts (via FERM domain) with MPP1. Interacts with LAYN and WWC1. Interacts with the CUL4A-RBX1-DDB1-VprBP/DCAF1 E3 ubiquitin-protein ligase complex. The unphosphorylated form interacts (via FERM domain) with VPRBP/DCAF1. Interacts (via FERM domain) with NOP53; the interaction is direct. Interacts with SCHIP1; the interaction is direct. In terms of processing, ubiquitinated by the CUL4A-RBX1-DDB1-DCAF1/VprBP E3 ubiquitin-protein ligase complex for ubiquitination and subsequent proteasome-dependent degradation. Phosphorylation of Ser-514 inhibits nuclear localization by disrupting the intramolecular association of the FERM domain with the C-terminal tail. The dephosphorylation of Ser-514 favors the interaction with NOP53.

The protein resides in the cell membrane. It is found in the cell projection. It localises to the cytoplasm. Its subcellular location is the cytoskeleton. The protein localises to the nucleus. In terms of biological role, probable regulator of the Hippo/SWH (Sav/Wts/Hpo) signaling pathway, a signaling pathway that plays a pivotal role in tumor suppression by restricting proliferation and promoting apoptosis. Along with WWC1 can synergistically induce the phosphorylation of LATS1 and LATS2 and can probably function in the regulation of the Hippo/SWH (Sav/Wts/Hpo) signaling pathway. May act as a membrane stabilizing protein. May inhibit PI3 kinase by binding to AGAP2 and impairing its stimulating activity. Suppresses cell proliferation and tumorigenesis by inhibiting the CUL4A-RBX1-DDB1-VprBP/DCAF1 E3 ubiquitin-protein ligase complex Plays a role in lens development and is required for complete fiber cell terminal differentiation, maintenance of cell polarity and separation of the lens vesicle from the corneal epithelium. This chain is Merlin (Nf2), found in Rattus norvegicus (Rat).